The chain runs to 253 residues: Phosphate import ATP-binding protein PstB (253 aa).

Residues 7–249 form the ABC transporter domain; sequence ASAKNLNLWY…PQSSKTKRYI (243 aa). 39–46 is a binding site for ATP; it reads GPSGCGKS.

The protein belongs to the ABC transporter superfamily. Phosphate importer (TC 3.A.1.7) family. As to quaternary structure, the complex is composed of two ATP-binding proteins (PstB), two transmembrane proteins (PstC and PstA) and a solute-binding protein (PstS).

Its subcellular location is the cell inner membrane. It catalyses the reaction phosphate(out) + ATP + H2O = ADP + 2 phosphate(in) + H(+). Functionally, part of the ABC transporter complex PstSACB involved in phosphate import. Responsible for energy coupling to the transport system. The sequence is that of Phosphate import ATP-binding protein PstB from Ehrlichia ruminantium (strain Gardel).